The primary structure comprises 679 residues: HEAT repeat-containing protein 3 (679 aa).

A compositionally biased stretch (basic residues) spans 1–11 (MGKSRTKRFKR). Positions 1–40 (MGKSRTKRFKRPQFSPIESCQAEAAAASNGTGDEEDDGPA) are disordered. The residue at position 15 (Ser15) is a Phosphoserine. 2 HEAT repeats span residues 38–69 (GPAA…VQQR) and 74–110 (DLAR…SACG). Position 144 is a phosphoserine (Ser144). Residue Thr339 is modified to Phosphothreonine.

It belongs to the nuclear import and ribosome assembly adapter family. Component of a hexameric 5S RNP precursor complex, composed of 5S RNA, RRS1, RPF2/BXDC1, RPL5, RPL11 and HEATR3; this complex acts as a precursor for ribosome assembly.

In terms of biological role, plays a role in ribosome biogenesis and in nuclear import of the 60S ribosomal protein L5/large ribosomal subunit protein uL18 (RPL5). Required for proper erythrocyte maturation. In Mus musculus (Mouse), this protein is HEAT repeat-containing protein 3 (Heatr3).